The sequence spans 73 residues: UPF0499 protein NFIA_054990 (73 aa).

Residues 1–20 (MKSFNLLSLSLLLAIASAAA) form the signal peptide. Intrachain disulfides connect cysteine 46–cysteine 60, cysteine 50–cysteine 63, and cysteine 56–cysteine 70.

Belongs to the UPF0499 family.

It localises to the secreted. The protein is UPF0499 protein NFIA_054990 of Neosartorya fischeri (strain ATCC 1020 / DSM 3700 / CBS 544.65 / FGSC A1164 / JCM 1740 / NRRL 181 / WB 181) (Aspergillus fischerianus).